The primary structure comprises 94 residues: MVYISNGQVLDSRSQSPWRLSLITDFFWGIAEFVVLFFKTLLQQDVKKGRGYRNSSDSRYDDGRGPPGNPPRRMGRISHLHGPSPPPMAGGUGR.

A helical transmembrane segment spans residues Leu-20–Leu-42. Residues Lys-47–Arg-94 are disordered. Position 92 (Sec-92) is a non-standard amino acid, selenocysteine.

This sequence belongs to the selenoprotein K family. As to quaternary structure, interacts with DERL1, DERL2, DERL3 and SELENOS. The SELENOK-SELENOS complex interacts with VCP. Interacts with ZDHHC6. Cleaved by CAPN2/m-calpain in resting macrophages but not in activated macrophages. Macrophage activation up-regulates expression of the calpain inhibitor CAST/calpastatin, resulting in inhibition of CAPN2 activity. Post-translationally, truncated SELENOK proteins produced by failed UGA/Sec decoding are ubiquitinated by the CRL2(KLHDC2) complex, which recognizes the diglycine (Gly-Gly) at the C-terminus of truncated SELENOK proteins.

Its subcellular location is the endoplasmic reticulum membrane. The protein resides in the cell membrane. Required for Ca(2+) flux in immune cells and plays a role in T-cell proliferation and in T-cell and neutrophil migration. Involved in endoplasmic reticulum-associated degradation (ERAD) of soluble glycosylated proteins. Required for palmitoylation and cell surface expression of CD36 and involved in macrophage uptake of low-density lipoprotein and in foam cell formation. Together with ZDHHC6, required for palmitoylation of ITPR1 in immune cells, leading to regulate ITPR1 stability and function. Plays a role in protection of cells from ER stress-induced apoptosis. Protects cells from oxidative stress when overexpressed in cardiomyocytes. In Chinchilla lanigera (Long-tailed chinchilla), this protein is Selenoprotein K.